A 914-amino-acid chain; its full sequence is Valine--tRNA ligase (914 aa).

Positions 47-57 (PYPTGELHMGH) match the 'HIGH' region motif. Residues 552–556 (KMSKS) carry the 'KMSKS' region motif. Position 555 (Lys-555) interacts with ATP.

It belongs to the class-I aminoacyl-tRNA synthetase family. ValS type 2 subfamily.

Its subcellular location is the cytoplasm. The catalysed reaction is tRNA(Val) + L-valine + ATP = L-valyl-tRNA(Val) + AMP + diphosphate. Functionally, catalyzes the attachment of valine to tRNA(Val). As ValRS can inadvertently accommodate and process structurally similar amino acids such as threonine, to avoid such errors, it has a 'posttransfer' editing activity that hydrolyzes mischarged Thr-tRNA(Val) in a tRNA-dependent manner. The polypeptide is Valine--tRNA ligase (Methanopyrus kandleri (strain AV19 / DSM 6324 / JCM 9639 / NBRC 100938)).